The sequence spans 1094 residues: DNA polymerase delta catalytic subunit (1094 aa).

Cys1003, Cys1006, Cys1016, and Cys1019 together coordinate Zn(2+). A CysA-type zinc finger spans residues 1003-1019; that stretch reads CIGCNSSIKKPPLCNHC. Cys1049, Cys1052, Cys1062, and Cys1067 together coordinate [4Fe-4S] cluster. The CysB motif motif lies at 1049 to 1067; the sequence is CQRCQGNLHVDVICMNRDC.

It belongs to the DNA polymerase type-B family. In terms of assembly, heterodimer composed of a catalytic subunit POLD and a small regulatory subunit. It depends on [4Fe-4S] cluster as a cofactor. Requires Mg(2+) as cofactor.

Its subcellular location is the nucleus. The catalysed reaction is DNA(n) + a 2'-deoxyribonucleoside 5'-triphosphate = DNA(n+1) + diphosphate. Its activity is regulated as follows. The small regulatory subunit delta and PCNA1 increase POLD catalytic activity. Its function is as follows. This polymerase possesses two enzymatic activities: DNA synthesis (polymerase) and an exonucleolytic activity that degrades single-stranded DNA in the 3'- to 5'-direction. The chain is DNA polymerase delta catalytic subunit (POLD) from Plasmodium falciparum (isolate K1 / Thailand).